The following is a 274-amino-acid chain: Large ribosomal subunit protein uL2 (274 aa).

Residues 225–274 form a disordered region; it reads MNPVDHPHGGGEGRSPIGRHPVTPWGKPTLGVKTRKKNKASSKLIIKRRK. Positions 257-274 are enriched in basic residues; that stretch reads KTRKKNKASSKLIIKRRK.

It belongs to the universal ribosomal protein uL2 family. Part of the 50S ribosomal subunit. Forms a bridge to the 30S subunit in the 70S ribosome.

One of the primary rRNA binding proteins. Required for association of the 30S and 50S subunits to form the 70S ribosome, for tRNA binding and peptide bond formation. It has been suggested to have peptidyltransferase activity; this is somewhat controversial. Makes several contacts with the 16S rRNA in the 70S ribosome. This chain is Large ribosomal subunit protein uL2, found in Carboxydothermus hydrogenoformans (strain ATCC BAA-161 / DSM 6008 / Z-2901).